We begin with the raw amino-acid sequence, 303 residues long: Putative S-adenosyl-L-methionine-dependent methyltransferase ML2020 (303 aa).

S-adenosyl-L-methionine contacts are provided by residues aspartate 130 and aspartate 159–leucine 160.

It belongs to the UPF0677 family.

Functionally, exhibits S-adenosyl-L-methionine-dependent methyltransferase activity. This chain is Putative S-adenosyl-L-methionine-dependent methyltransferase ML2020, found in Mycobacterium leprae (strain TN).